Consider the following 267-residue polypeptide: 3-methyl-2-oxobutanoate hydroxymethyltransferase (267 aa).

Mg(2+) contacts are provided by D45 and D84. 3-methyl-2-oxobutanoate-binding positions include D45–S46, D84, and K113. E115 contributes to the Mg(2+) binding site. E182 (proton acceptor) is an active-site residue.

Belongs to the PanB family. In terms of assembly, homodecamer; pentamer of dimers. Mg(2+) is required as a cofactor.

Its subcellular location is the cytoplasm. It carries out the reaction 3-methyl-2-oxobutanoate + (6R)-5,10-methylene-5,6,7,8-tetrahydrofolate + H2O = 2-dehydropantoate + (6S)-5,6,7,8-tetrahydrofolate. It participates in cofactor biosynthesis; coenzyme A biosynthesis. Catalyzes the reversible reaction in which hydroxymethyl group from 5,10-methylenetetrahydrofolate is transferred onto alpha-ketoisovalerate to form ketopantoate. This is 3-methyl-2-oxobutanoate hydroxymethyltransferase from Saccharolobus islandicus (strain Y.N.15.51 / Yellowstone #2) (Sulfolobus islandicus).